The sequence spans 65 residues: Large ribosomal subunit protein bL35 (65 aa).

It belongs to the bacterial ribosomal protein bL35 family.

The sequence is that of Large ribosomal subunit protein bL35 from Pectobacterium atrosepticum (strain SCRI 1043 / ATCC BAA-672) (Erwinia carotovora subsp. atroseptica).